A 177-amino-acid polypeptide reads, in one-letter code: Large ribosomal subunit protein uL6 (177 aa).

Belongs to the universal ribosomal protein uL6 family. In terms of assembly, part of the 50S ribosomal subunit.

This protein binds to the 23S rRNA, and is important in its secondary structure. It is located near the subunit interface in the base of the L7/L12 stalk, and near the tRNA binding site of the peptidyltransferase center. This is Large ribosomal subunit protein uL6 from Janthinobacterium sp. (strain Marseille) (Minibacterium massiliensis).